The following is a 789-amino-acid chain: Phenylalanine--tRNA ligase beta subunit (789 aa).

The tRNA-binding domain maps to 38–151; it reads KKHLQSFVVV…NTYNVGESFF (114 aa). One can recognise a B5 domain in the interval 398 to 474; the sequence is HNDILLNFSP…RLYGYDKILE (77 aa). Residues Asp-452, Asp-458, Glu-461, and Glu-462 each contribute to the Mg(2+) site. The FDX-ACB domain maps to 694 to 787; sequence LRYQSVKRDF…ISKGFNGILR (94 aa).

The protein belongs to the phenylalanyl-tRNA synthetase beta subunit family. Type 1 subfamily. Tetramer of two alpha and two beta subunits. Mg(2+) serves as cofactor.

The protein localises to the cytoplasm. It carries out the reaction tRNA(Phe) + L-phenylalanine + ATP = L-phenylalanyl-tRNA(Phe) + AMP + diphosphate + H(+). This is Phenylalanine--tRNA ligase beta subunit from Ehrlichia ruminantium (strain Gardel).